Reading from the N-terminus, the 340-residue chain is Aldo-keto reductase yakc [NADP(+)] (340 aa).

Tyrosine 56 functions as the Proton donor in the catalytic mechanism. Histidine 126 provides a ligand contact to substrate. 208–218 (APLGRGFLTGA) is a binding site for NADP(+).

It belongs to the aldo/keto reductase family. Aldo/keto reductase 2 subfamily. In terms of assembly, monomer.

This is Aldo-keto reductase yakc [NADP(+)] (yakc) from Schizosaccharomyces pombe (strain 972 / ATCC 24843) (Fission yeast).